Reading from the N-terminus, the 866-residue chain is Retinoblastoma-related protein 2 (866 aa).

A domain A region spans residues 274–475 (TPITSAMTTA…EKGSSLYNSL (202 aa)). The tract at residues 274–721 (TPITSAMTTA…NEVFVPAAKP (448 aa)) is pocket. The interval 476–593 (IVARPSVASE…PVGGNEKCAD (118 aa)) is spacer. The interval 513-551 (LPATPSKKRAAGRDDNADPRSPKRPCNESRSPVVEHNLQ) is disordered. Positions 523-539 (AGRDDNADPRSPKRPCN) are enriched in basic and acidic residues. The domain B stretch occupies residues 594-721 (VTIQIFFSKI…NEVFVPAAKP (128 aa)). 2 disordered regions span residues 731–754 (TRPE…PFPN) and 839–866 (SLGQ…KPDT). Residues 841 to 850 (GQPNGGSTSL) are compositionally biased toward polar residues.

Belongs to the retinoblastoma protein (RB) family. Ubiquitous.

It is found in the nucleus. Its function is as follows. Regulator of biological processes that recruits a histone deacetylase to control gene transcription. May play a role in the entry into mitosis, negatively regulating the cell proliferation. Formation of stable complexes with geminiviridae replication-associated proteins may create a cellular environment which favors viral DNA replication. In Zea mays (Maize), this protein is Retinoblastoma-related protein 2 (RBR2).